An 890-amino-acid polypeptide reads, in one-letter code: DNA mismatch repair protein MutS (890 aa).

Position 607-614 (607-614) interacts with ATP; that stretch reads GPNMSGKS.

Belongs to the DNA mismatch repair MutS family.

This protein is involved in the repair of mismatches in DNA. It is possible that it carries out the mismatch recognition step. This protein has a weak ATPase activity. This chain is DNA mismatch repair protein MutS, found in Bacillus thuringiensis subsp. konkukian (strain 97-27).